We begin with the raw amino-acid sequence, 800 residues long: DNA mismatch repair protein MutS (800 aa).

616–623 (GPNMGGKS) is an ATP binding site.

It belongs to the DNA mismatch repair MutS family.

This protein is involved in the repair of mismatches in DNA. It is possible that it carries out the mismatch recognition step. This protein has a weak ATPase activity. The polypeptide is DNA mismatch repair protein MutS (Buchnera aphidicola subsp. Baizongia pistaciae (strain Bp)).